We begin with the raw amino-acid sequence, 61 residues long: Photosystem II reaction center protein K (61 aa).

Positions 1–24 are excised as a propeptide; that stretch reads MINIVSLVCIYINSVPYSSIFFLD. Residues 36–56 traverse the membrane as a helical segment; the sequence is IVDIMPVIPLFFFLLAFVWQA.

Belongs to the PsbK family. PSII is composed of 1 copy each of membrane proteins PsbA, PsbB, PsbC, PsbD, PsbE, PsbF, PsbH, PsbI, PsbJ, PsbK, PsbL, PsbM, PsbT, PsbX, PsbY, PsbZ, Psb30/Ycf12, at least 3 peripheral proteins of the oxygen-evolving complex and a large number of cofactors. It forms dimeric complexes.

The protein localises to the plastid. It is found in the chloroplast thylakoid membrane. Functionally, one of the components of the core complex of photosystem II (PSII). PSII is a light-driven water:plastoquinone oxidoreductase that uses light energy to abstract electrons from H(2)O, generating O(2) and a proton gradient subsequently used for ATP formation. It consists of a core antenna complex that captures photons, and an electron transfer chain that converts photonic excitation into a charge separation. This chain is Photosystem II reaction center protein K, found in Lotus japonicus (Lotus corniculatus var. japonicus).